We begin with the raw amino-acid sequence, 205 residues long: Lipoprotein MlpB (205 aa).

A signal peptide spans 1–17 (MKIINILFCLLLIVLNS). The N-palmitoyl cysteine moiety is linked to residue cysteine 18. The S-diacylglycerol cysteine moiety is linked to residue cysteine 18.

This sequence belongs to the Multicopy lipoprotein (Mlp) family.

The protein localises to the cell outer membrane. In terms of biological role, an outer membrane protein that may participate in pathogenesis. Some human Lyme disease patients have antibodies against this protein. The Mlp proteins probably undergo intragenic recombination, generating new alleles. The chain is Lipoprotein MlpB from Borreliella burgdorferi (strain ATCC 35210 / DSM 4680 / CIP 102532 / B31) (Borrelia burgdorferi).